The sequence spans 340 residues: MKRIAVLTSGGDAPGMNAAIRAVVRKAISEGIEVYGINHGYAGMVAGDIFPLTSASVGDKIGRGGTFLYSARYPEFAQVEGQLAGIEQLKKFGIEGVVVIGGDGSYHGAMRLTEHGFPAVGLPGTIDNDIVGTDFTIGFDTAVSTVVDALDKIRDTSSSHNRTFVVEVMGRNAGDIALNAGIAAGADDICIPEKEFKFENVVNNINKGYEKGKNHHIIVLAEGVMTGEEFATKLKEAGYKGDLRVSVLGHIQRGGSPTARDRVLASRMGARAVELLRDGIGGVAVGIRNEELVESPILGTAEEGALFSLTTEGGIKVNNPHKAGLELYRLNSALNNLNLN.

G11 lines the ATP pocket. 21–25 is a binding site for ADP; it reads RAVVR. ATP contacts are provided by residues 72–73 and 102–105; these read RY and GDGS. Residue D103 participates in Mg(2+) binding. Residue 125-127 participates in substrate binding; that stretch reads TID. D127 (proton acceptor) is an active-site residue. Position 154 (R154) interacts with ADP. Residues R162 and 169–171 contribute to the substrate site; that span reads MGR. ADP is bound by residues 185-187, K211, and 213-215; these read GAD and KNH. Substrate contacts are provided by residues E222, R244, and 250–253; that span reads HIQR.

The protein belongs to the phosphofructokinase type A (PFKA) family. ATP-dependent PFK group I subfamily. Prokaryotic clade 'B1' sub-subfamily. As to quaternary structure, homotetramer. The cofactor is Mg(2+).

The protein resides in the cytoplasm. The catalysed reaction is beta-D-fructose 6-phosphate + ATP = beta-D-fructose 1,6-bisphosphate + ADP + H(+). It participates in carbohydrate degradation; glycolysis; D-glyceraldehyde 3-phosphate and glycerone phosphate from D-glucose: step 3/4. Allosterically activated by ADP and other diphosphonucleosides, and allosterically inhibited by phosphoenolpyruvate. In terms of biological role, catalyzes the phosphorylation of D-fructose 6-phosphate to fructose 1,6-bisphosphate by ATP, the first committing step of glycolysis. This chain is ATP-dependent 6-phosphofructokinase, found in Lactococcus lactis subsp. lactis (Streptococcus lactis).